The sequence spans 261 residues: Leucine-rich repeat-containing protein 61 (261 aa).

3 LRR repeats span residues 54–75 (GLEW…ASLR), 76–97 (QLAV…AACE), and 98–119 (NLQC…QCLA). The region spanning 138–183 (NPLCASPCYWASVRELLPGLKVLDGERVSGRGSDFYQLCRDLDSSL) is the LRRCT domain.

The protein is Leucine-rich repeat-containing protein 61 (LRRC61) of Bos taurus (Bovine).